The chain runs to 453 residues: uncharacterized protein (453 aa).

Residues 5–63 (LLKKNQSIELTIEDLTHDGSGVGKIDGYPFFIPNTLPGEKVTAKIIKLNKNYGFARMEN) enclose the TRAM domain. Residues Cys-76, Cys-82, Cys-85, and Cys-162 each coordinate [4Fe-4S] cluster. S-adenosyl-L-methionine contacts are provided by Gln-285, Tyr-314, Glu-335, and Asp-383. The Nucleophile role is filled by Cys-410.

This sequence belongs to the class I-like SAM-binding methyltransferase superfamily. RNA M5U methyltransferase family.

This is an uncharacterized protein from Listeria monocytogenes serovar 1/2a (strain ATCC BAA-679 / EGD-e).